The sequence spans 308 residues: Cytochrome b (308 aa).

4 helical membrane passes run 1–21 (FGSLLGICLVTQIITGLLLAT), 45–66 (WLIRNLHANGASFFFICIYLHI), 81–101 (WNTGVILLLTLMATAFVGYVL), and 146–166 (FFALHFLLPFVIAGITLVHLT). H51 and H65 together coordinate heme b. Heme b is bound by residues H150 and H164. H169 is a binding site for a ubiquinone. The next 3 membrane-spanning stretches (helical) occupy residues 194–214 (MKDILGFALLFIALVAMALFS), 256–276 (LGGVLALAASVLVLFLIPLLH), and 288–308 (LSQILFWTLVANLLVLTWVGS).

It belongs to the cytochrome b family. In terms of assembly, the cytochrome bc1 complex contains 11 subunits: 3 respiratory subunits (MT-CYB, CYC1 and UQCRFS1), 2 core proteins (UQCRC1 and UQCRC2) and 6 low-molecular weight proteins (UQCRH/QCR6, UQCRB/QCR7, UQCRQ/QCR8, UQCR10/QCR9, UQCR11/QCR10 and a cleavage product of UQCRFS1). This cytochrome bc1 complex then forms a dimer. It depends on heme b as a cofactor.

The protein resides in the mitochondrion inner membrane. Its function is as follows. Component of the ubiquinol-cytochrome c reductase complex (complex III or cytochrome b-c1 complex) that is part of the mitochondrial respiratory chain. The b-c1 complex mediates electron transfer from ubiquinol to cytochrome c. Contributes to the generation of a proton gradient across the mitochondrial membrane that is then used for ATP synthesis. The protein is Cytochrome b (MT-CYB) of Amblyornis macgregoriae (Macgregor's bowerbird).